Reading from the N-terminus, the 284-residue chain is MQPTPTQRPEAIVHDEKAQLDFARDMSYGDYLHLDELLGAQRPLSPEHNEMLFIVQHQTSELWMKLMLHELRAAIAAIQQDRLQPAFKMLARVSKILEQLVSAWDVLATMTPPEYSALRPYLAHSSGFQSYQYRQIEYLLGNKNAAMLQPHAHRADLLAQVRAAFEAPSLYDEALRFLARSGLAVPAGALQRDWTQPYRADDQVEQAWLTVYRQSERYWNQYQLGEKLTDLEDAFRLWRFRHVTTVERIIGFKRGTGGTSGVTYLRKMLEVVLFPEIWKLRTDL.

Substrate-binding positions include 53 to 57, Tyr115, and Arg119; that span reads FIVQH. Residue His242 coordinates heme. A substrate-binding site is contributed by Thr256.

This sequence belongs to the tryptophan 2,3-dioxygenase family. As to quaternary structure, homotetramer. It depends on heme as a cofactor.

The enzyme catalyses L-tryptophan + O2 = N-formyl-L-kynurenine. It functions in the pathway amino-acid degradation; L-tryptophan degradation via kynurenine pathway; L-kynurenine from L-tryptophan: step 1/2. Heme-dependent dioxygenase that catalyzes the oxidative cleavage of the L-tryptophan (L-Trp) pyrrole ring and converts L-tryptophan to N-formyl-L-kynurenine. Catalyzes the oxidative cleavage of the indole moiety. The sequence is that of Tryptophan 2,3-dioxygenase from Bordetella parapertussis (strain 12822 / ATCC BAA-587 / NCTC 13253).